Consider the following 71-residue polypeptide: Conotoxin De13.1 (71 aa).

The signal sequence occupies residues 1-19 (MSGMGVLLLVLLLVMPLAA). Residues 20–35 (FHQDGEGEATRRSGGL) constitute a propeptide that is removed on maturation. P40 and P44 each carry 4-hydroxyproline. W51 is subject to 6'-bromotryptophan. E52 carries the 4-carboxyglutamate modification. K55 is subject to 5-hydroxylysine. Residue P58 is modified to 4-hydroxyproline. At H69 the chain carries Histidine amide.

This sequence belongs to the conotoxin G superfamily. Contains 4 disulfide bonds. In terms of tissue distribution, expressed by the venom duct.

The protein resides in the secreted. The protein is Conotoxin De13.1 of Conasprella delessertii (Sozon's cone).